The primary structure comprises 127 residues: MSKKYGGQISFDPPARLEKDQVVAKVVQLKGSALFMVVENNGQELLVEMPPKYRNKIWVRRNGFVIVDKSEFLEKDNKIDGTILYVVQSPLKNWKKQIYWPKEFADESLNQNDSEESSSSEEEYDSD.

The S1-like domain maps to 10–86 (SFDPPARLEK…NKIDGTILYV (77 aa)). Residues 107–127 (ESLNQNDSEESSSSEEEYDSD) form a disordered region. Acidic residues predominate over residues 113–127 (DSEESSSSEEEYDSD). Tyr-124 is subject to Phosphotyrosine. A Phosphoserine modification is found at Ser-126.

It belongs to the EIF1AD family.

It is found in the cytoplasm. Its subcellular location is the nucleus. The chain is S1-like domain-containing protein C146.08c from Schizosaccharomyces pombe (strain 972 / ATCC 24843) (Fission yeast).